The following is a 111-amino-acid chain: Small ubiquitin-related modifier 3 (111 aa).

The Ubiquitin-like domain maps to 16-93; that stretch reads AHVILKVKSQ…IDACRAMSGG (78 aa). A Glycyl lysine isopeptide (Gly-Lys) (interchain with K-? in acceptor proteins) cross-link involves residue glycine 93.

It belongs to the ubiquitin family. SUMO subfamily. As to quaternary structure, interacts with SAE2, SCE1, SIZ1 and MMS21. Covalently attached to a number of proteins. Interacts with NPR1; this interaction promotes NPR1 phosphorylation and triggers its sumoylation and subsequent degradation.

It localises to the nucleus. It is found in the cytoplasm. In terms of biological role, ubiquitin-like protein which can be covalently attached to target lysines as a monomer. Does not seem to be involved in protein degradation and may function as an antagonist of ubiquitin in the degradation process. Promotes NPR1 sumoylation to activate defense gene expression and regulate its degradation. The protein is Small ubiquitin-related modifier 3 of Arabidopsis thaliana (Mouse-ear cress).